Reading from the N-terminus, the 878-residue chain is Phosphoenolpyruvate carboxylase (878 aa).

Catalysis depends on residues histidine 137 and lysine 545.

The protein belongs to the PEPCase type 1 family. Mg(2+) is required as a cofactor.

The enzyme catalyses oxaloacetate + phosphate = phosphoenolpyruvate + hydrogencarbonate. Its function is as follows. Forms oxaloacetate, a four-carbon dicarboxylic acid source for the tricarboxylic acid cycle. In Yersinia pseudotuberculosis serotype O:1b (strain IP 31758), this protein is Phosphoenolpyruvate carboxylase.